The following is a 168-amino-acid chain: ATP synthase subunit b (168 aa).

A helical membrane pass occupies residues 9–29 (SIPFGTIAYTLFIFLLLLVML).

This sequence belongs to the ATPase B chain family. In terms of assembly, F-type ATPases have 2 components, F(1) - the catalytic core - and F(0) - the membrane proton channel. F(1) has five subunits: alpha(3), beta(3), gamma(1), delta(1), epsilon(1). F(0) has three main subunits: a(1), b(2) and c(10-14). The alpha and beta chains form an alternating ring which encloses part of the gamma chain. F(1) is attached to F(0) by a central stalk formed by the gamma and epsilon chains, while a peripheral stalk is formed by the delta and b chains.

Its subcellular location is the cell membrane. Functionally, f(1)F(0) ATP synthase produces ATP from ADP in the presence of a proton or sodium gradient. F-type ATPases consist of two structural domains, F(1) containing the extramembraneous catalytic core and F(0) containing the membrane proton channel, linked together by a central stalk and a peripheral stalk. During catalysis, ATP synthesis in the catalytic domain of F(1) is coupled via a rotary mechanism of the central stalk subunits to proton translocation. Its function is as follows. Component of the F(0) channel, it forms part of the peripheral stalk, linking F(1) to F(0). The protein is ATP synthase subunit b of Bacillus cereus (strain B4264).